Reading from the N-terminus, the 507-residue chain is MAEEQARHVKNGLECIRALKAEPIGSLAIGEAMAAWSEISDNPGQEQATCKEEEAGASGLSKPCLSAIGSTEGGAPRIRGQGSGESDDDTETLGFPSRNLQASSTGLQCYYVYDHSGEAVKGIQDADSIMVQSGLDGDSTLSGGDNESENSDVDIGEPDTEGYAITDRGPAPISMGFRASDVETAEGGEIHELLRLQSRGNNFPKLGKTLNVPPPPDPGRASTSETPIKKGTDARLASFGTEIASLLTDGATQCARKSPSEPSGPGAPAGNVPECVSNAALTQEWTPESGTTISPRSQNKGKGGDYYDDELFSDVQDIKTALAKIHEDNQKVISKLESLLLLKGEVESIKKQINKQNISISTLEGHLSSIMIAIPGLGKDPNDPTADVEINPDLKPIIGRDSGRALAEVLKKPVASRQLQGMTNGRTSSRGQLLKEFQLKPIGKKMSSAVGFVPDTGPASRSVIRSIIKSSRIEEDRKRYLMTLLDDIKGANDLAKFHQMLMKIIMK.

The interaction with N0 stretch occupies residues 1–48 (MAEEQARHVKNGLECIRALKAEPIGSLAIGEAMAAWSEISDNPGQEQA). 4 disordered regions span residues 40–98 (SDNP…FPSR), 134–174 (GLDG…APIS), 201–231 (NNFP…IKKG), and 251–305 (ATQC…KGGD). A Phosphoserine modification is found at serine 86. Positions 134–145 (GLDGDSTLSGGD) are enriched in low complexity. Acidic residues predominate over residues 146-160 (NESENSDVDIGEPDT). Position 151 is a phosphoserine (serine 151). The span at 260 to 270 (SEPSGPGAPAG) shows a compositional bias: low complexity. Over residues 279-300 (AALTQEWTPESGTTISPRSQNK) the composition is skewed to polar residues. Residues 304 to 376 (GDYYDDELFS…LSSIMIAIPG (73 aa)) are multimerization. 2 interaction with the L polymerase regions span residues 361–377 (STLE…IPGL) and 396–410 (PIIG…AEVL). A x domain (XD) region spans residues 457–507 (GPASRSVIRSIIKSSRIEEDRKRYLMTLLDDIKGANDLAKFHQMLMKIIMK). Positions 459-507 (ASRSVIRSIIKSSRIEEDRKRYLMTLLDDIKGANDLAKFHQMLMKIIMK) are interaction with the nucleocapsid (N-RNA).

It belongs to the morbillivirus P protein family. In terms of assembly, homotetramer. Interacts (via multimerization domain and XD domain) with polymerase L; this interaction forms the polymerase L-P complex. Interacts (via N-terminus) with N0 (via Ncore); this interaction allows P to chaperon N0 to avoid N polymerization and non-specific RNA binding before encapsidation. Interacts (via C-terminus) with N-RNA template (via Ntail); this interaction maintains the P/L complex anchored to the nucleocapsid template during the sequential transcription. Interacts (via C-terminus) with protein C this interaction allows C to associate with the ribonucleocapsid. Post-translationally, phosphorylation on serines by host CK2 is necessary for the formation of viral factories.

Functionally, essential cofactor of the RNA polymerase L that plays a central role in the transcription and replication by forming the polymerase complex with RNA polymerase L and recruiting L to the genomic N-RNA template for RNA synthesis. Also plays a central role in the encapsidation of nascent RNA chains by forming the encapsidation complex with the nucleocapsid protein N (N-P complex). Acts as a chaperone for newly synthesized free N protein, so-called N0, allowing encapsidation of nascent RNA chains during replication. The nucleoprotein protein N prevents excessive phosphorylation of P, which leads to down-regulation of viral transcription/ replication. Participates, together with N, in the formation of viral factories (viroplasms), which are large inclusions in the host cytoplasm where replication takes place. The sequence is that of Phosphoprotein (P/V) from Homo sapiens (Human).